The primary structure comprises 205 residues: Small ribosomal subunit protein uS4 (205 aa).

Positions 94 to 154 (SRLDNSVYRA…TRKDGKIRKN (61 aa)) constitute an S4 RNA-binding domain.

It belongs to the universal ribosomal protein uS4 family. As to quaternary structure, part of the 30S ribosomal subunit. Contacts protein S5. The interaction surface between S4 and S5 is involved in control of translational fidelity.

Functionally, one of the primary rRNA binding proteins, it binds directly to 16S rRNA where it nucleates assembly of the body of the 30S subunit. With S5 and S12 plays an important role in translational accuracy. This is Small ribosomal subunit protein uS4 from Mesomycoplasma hyopneumoniae (strain 232) (Mycoplasma hyopneumoniae).